The following is a 273-amino-acid chain: Kit ligand (273 aa).

The first 25 residues, 1–25 (MKKTQTWIITCIYLQLLLFNPLVKT), serve as a signal peptide directing secretion. At 26–214 (KEICGNPVTD…AKAPEDSGLQ (189 aa)) the chain is on the extracellular side. 2 disulfide bridges follow: Cys29/Cys114 and Cys68/Cys163. N-linked (GlcNAc...) asparagine glycans are attached at residues Asn90, Asn97, Asn145, and Asn195. The tract at residues 190-210 (ASSLRNDSSSSNRKAAKAPED) is disordered. The segment covering 191–202 (SSLRNDSSSSNR) has biased composition (low complexity). Residues 215-237 (WTAMALPALISLVIGFAFGALYW) form a helical membrane-spanning segment. Residues 238 to 273 (KKKQSSLTRAVENIQINEEDNEISMLQQKEREFQEV) lie on the Cytoplasmic side of the membrane.

The protein belongs to the SCF family. Homodimer, non-covalently linked. Heterotetramer with KIT, binding two KIT molecules; thereby mediates KIT dimerization and subsequent activation by autophosphorylation. A soluble form is produced by proteolytic processing of isoform 1 in the extracellular domain. In terms of tissue distribution, expressed in the cochlea.

Its subcellular location is the cell membrane. It is found in the cytoplasm. The protein localises to the cytoskeleton. The protein resides in the cell projection. It localises to the lamellipodium. Its subcellular location is the filopodium. It is found in the secreted. Functionally, ligand for the receptor-type protein-tyrosine kinase KIT. Plays an essential role in the regulation of cell survival and proliferation, hematopoiesis, stem cell maintenance, gametogenesis, mast cell development, migration and function, and in melanogenesis. KITLG/SCF binding can activate several signaling pathways. Promotes phosphorylation of PIK3R1, the regulatory subunit of phosphatidylinositol 3-kinase, and subsequent activation of the kinase AKT1. KITLG/SCF and KIT also transmit signals via GRB2 and activation of RAS, RAF1 and the MAP kinases MAPK1/ERK2 and/or MAPK3/ERK1. KITLG/SCF and KIT promote activation of STAT family members STAT1, STAT3 and STAT5. KITLG/SCF and KIT promote activation of PLCG1, leading to the production of the cellular signaling molecules diacylglycerol and inositol 1,4,5-trisphosphate. KITLG/SCF acts synergistically with other cytokines, probably interleukins. The sequence is that of Kit ligand (Kitlg) from Mus musculus (Mouse).